The primary structure comprises 463 residues: Asparagine--tRNA ligase (463 aa).

The protein belongs to the class-II aminoacyl-tRNA synthetase family. In terms of assembly, homodimer.

The protein resides in the cytoplasm. It carries out the reaction tRNA(Asn) + L-asparagine + ATP = L-asparaginyl-tRNA(Asn) + AMP + diphosphate + H(+). In Clostridium kluyveri (strain ATCC 8527 / DSM 555 / NBRC 12016 / NCIMB 10680 / K1), this protein is Asparagine--tRNA ligase.